The sequence spans 333 residues: NAC domain-containing protein 26 (333 aa).

The region spanning 14 to 173 is the NAC domain; that stretch reads LPPGFRFHPT…DWAVCRIFHK (160 aa). A DNA-binding region spans residues 114-179; that stretch reads IGMKKTLVFY…IFHKSSGIKK (66 aa). A disordered region spans residues 143 to 162; it reads ADASPPQPPPPPSSAEPPRQ. The span at 147–157 shows a compositional bias: pro residues; that stretch reads PPQPPPPPSSA.

As to quaternary structure, forms homodimers. Forms heterodimers with NAC20. Forms heterodimers with NAC23. Expressed in developing seeds.

It localises to the nucleus. Transcription factor that acts redundantly with NAC20 to regulate the expression of genes involved in the biosynthesis of starch and storage proteins in grain. Directly binds to the promoters of starch synthase 1 (SS1), pullulanase (PUL), glutelin A1 (GLUA1), glutelins B4 and B5 (GLUB4 and GLUB5), alpha-globulin and 16 kDa prolamin, and activates their expression. Possesses transactivation activity in yeast. This Oryza sativa subsp. indica (Rice) protein is NAC domain-containing protein 26.